Reading from the N-terminus, the 81-residue chain is Photosystem I iron-sulfur center (81 aa).

4Fe-4S ferredoxin-type domains lie at 2-31 and 37-68; these read AHTV…MVPW and GQIA…IRVY. Residues Cys-11, Cys-14, Cys-17, Cys-21, Cys-48, Cys-51, Cys-54, and Cys-58 each contribute to the [4Fe-4S] cluster site.

As to quaternary structure, the cyanobacterial PSI reaction center is composed of one copy each of PsaA,B,C,D,E,F,I,J,K,L,M and X, and forms trimeric complexes. It depends on [4Fe-4S] cluster as a cofactor.

Its subcellular location is the cellular thylakoid membrane. It catalyses the reaction reduced [plastocyanin] + hnu + oxidized [2Fe-2S]-[ferredoxin] = oxidized [plastocyanin] + reduced [2Fe-2S]-[ferredoxin]. Apoprotein for the two 4Fe-4S centers FA and FB of photosystem I (PSI); essential for photochemical activity. FB is the terminal electron acceptor of PSI, donating electrons to ferredoxin. The C-terminus interacts with PsaA/B/D and helps assemble the protein into the PSI complex. Required for binding of PsaD and PsaE to PSI. PSI is a plastocyanin/cytochrome c6-ferredoxin oxidoreductase, converting photonic excitation into a charge separation, which transfers an electron from the donor P700 chlorophyll pair to the spectroscopically characterized acceptors A0, A1, FX, FA and FB in turn. This Synechococcus elongatus protein is Photosystem I iron-sulfur center (psaC).